Reading from the N-terminus, the 131-residue chain is Large ribosomal subunit protein bL12 (131 aa).

It belongs to the bacterial ribosomal protein bL12 family. Homodimer. Part of the ribosomal stalk of the 50S ribosomal subunit. Forms a multimeric L10(L12)X complex, where L10 forms an elongated spine to which 2 to 4 L12 dimers bind in a sequential fashion. Binds GTP-bound translation factors.

Functionally, forms part of the ribosomal stalk which helps the ribosome interact with GTP-bound translation factors. Is thus essential for accurate translation. This Prochlorococcus marinus (strain MIT 9313) protein is Large ribosomal subunit protein bL12.